The chain runs to 424 residues: MAFSTIVVLFVAAVGFGNKISSADTCPEFGEWKPWTECLWYPMQNIYDKMTASCGLPGHRNLTNILPLPPGFTIPPPCGHCSFKTRCRTRPKKEGCYPFDGEREICHEHGDICTIAKLPGIGCGWTVLQEVVKQCLSRPDIPEYMRAGYKKLFHMLPKGHCIEKDNQCKCCCGDYEPNEDGTECVKQQDHQCAPFNEPGDWSECLWFPLADMFKKVQSHCGVEGKPEGLSPSSLAPAGFQIPEKCGFCSFRLKCQSREKKEGCFPLKVDKKSCGAEDCPTCGDVCTLDKQNNSCAFTKAMGMKFWNSFAHKAKESNLAHWRRDGYADLFKFLPYGHCKEVGDKCKCCCHPYEPNEDGTACVVKQYCKSLEEVGGKKQQKDQPESEKKAENMPETTGNASHHQHRHHHGDSSSESHEQHHHHHHH.

Residues 1–17 (MAFSTIVVLFVAAVGFG) form the signal peptide. N291 is a glycosylation site (N-linked (GlcNAc...) asparagine). The segment covering 372 to 390 (VGGKKQQKDQPESEKKAEN) has biased composition (basic and acidic residues). The disordered stretch occupies residues 372-424 (VGGKKQQKDQPESEKKAENMPETTGNASHHQHRHHHGDSSSESHEQHHHHHHH). N397 carries an N-linked (GlcNAc...) asparagine glycan.

Glycosylated. Expressed in larval tissues like cuticle, hypodermis and muscle (at protein level). Note=Not excreted into striated muscle fibers or nurse cell.

The protein resides in the secreted. Functionally, binds iron and zinc. May bind nickel. In Trichinella spiralis (Trichina worm), this protein is Poly-cysteine and histidine-tailed protein.